Consider the following 222-residue polypeptide: MAEKPLFHYDEARGRMESVRWLLAAAGVEYEEKFIHTNEDLEKLRSDGVLMFQQVPMVEVDGMKLVQTRAIMNYFSSKYNLYGKDMKERALIDMYSEGLADLNEMFILYPFDPPGVKEANIALMKEKATNRYFPAFEKVFESHGQDYLVGNKLSKADVHLVEMIYNMEELDTNILANFPLLQALKTRISDMPTIKKFLQPGSQRQPPVDEKSIQKTRKIFKF.

The GST N-terminal domain occupies glutamate 3–glycine 83. Residues tyrosine 9, arginine 45, glutamine 54–valine 55, and glutamine 67–threonine 68 contribute to the glutathione site. One can recognise a GST C-terminal domain in the interval aspartate 85–valine 208.

This sequence belongs to the GST superfamily. Alpha family. Homodimer or heterodimer of GSTA1 and GSTA2.

It is found in the cytoplasm. The enzyme catalyses RX + glutathione = an S-substituted glutathione + a halide anion + H(+). Conjugation of reduced glutathione to a wide number of exogenous and endogenous hydrophobic electrophiles. This Rattus norvegicus (Rat) protein is Glutathione S-transferase A6 (Gsta6).